The chain runs to 163 residues: ATP synthase subunit b, sodium ion specific (163 aa).

A helical transmembrane segment spans residues 9–29 (VSIDINMFWQIINFLILMFFF).

The protein belongs to the ATPase B chain family. As to quaternary structure, F-type ATPases have 2 components, F(1) - the catalytic core - and F(0) - the membrane proton channel. F(1) has five subunits: alpha(3), beta(3), gamma(1), delta(1), epsilon(1). F(0) has three main subunits: a(1), b(2) and c(10-14). The alpha and beta chains form an alternating ring which encloses part of the gamma chain. F(1) is attached to F(0) by a central stalk formed by the gamma and epsilon chains, while a peripheral stalk is formed by the delta and b chains.

It localises to the cell inner membrane. Its function is as follows. F(1)F(0) ATP synthase produces ATP from ADP in the presence of a proton or sodium gradient. F-type ATPases consist of two structural domains, F(1) containing the extramembraneous catalytic core and F(0) containing the membrane proton channel, linked together by a central stalk and a peripheral stalk. During catalysis, ATP synthesis in the catalytic domain of F(1) is coupled via a rotary mechanism of the central stalk subunits to proton translocation. Component of the F(0) channel, it forms part of the peripheral stalk, linking F(1) to F(0). In Ilyobacter tartaricus, this protein is ATP synthase subunit b, sodium ion specific (atpF).